We begin with the raw amino-acid sequence, 206 residues long: Ribosomal RNA large subunit methyltransferase E (206 aa).

G60, W62, D80, N96, and D121 together coordinate S-adenosyl-L-methionine. K161 serves as the catalytic Proton acceptor.

It belongs to the class I-like SAM-binding methyltransferase superfamily. RNA methyltransferase RlmE family.

The protein localises to the cytoplasm. The catalysed reaction is uridine(2552) in 23S rRNA + S-adenosyl-L-methionine = 2'-O-methyluridine(2552) in 23S rRNA + S-adenosyl-L-homocysteine + H(+). In terms of biological role, specifically methylates the uridine in position 2552 of 23S rRNA at the 2'-O position of the ribose in the fully assembled 50S ribosomal subunit. In Francisella philomiragia subsp. philomiragia (strain ATCC 25017 / CCUG 19701 / FSC 153 / O#319-036), this protein is Ribosomal RNA large subunit methyltransferase E.